The primary structure comprises 394 residues: DNA replication and repair protein RecF (394 aa).

Position 30–37 (30–37) interacts with ATP; that stretch reads GRNGFGKT.

This sequence belongs to the RecF family.

It localises to the cytoplasm. Functionally, the RecF protein is involved in DNA metabolism; it is required for DNA replication and normal SOS inducibility. RecF binds preferentially to single-stranded, linear DNA. It also seems to bind ATP. The polypeptide is DNA replication and repair protein RecF (Corynebacterium glutamicum (strain R)).